The following is a 181-amino-acid chain: MKYPEMTLATLAILKYPNALLRKKSIPVEIFDDNLHNFLDDMYETLIESKGVGLAAIQVGRAERILIINIPREEDKQQYKEDLLEIINPTFLTQEECVEWEEGCLSVPDFYESIKRFDKVSIAYKDRYGNDRILKAQGFLAVAIQHEIDHLNGVLFVDKLPILKRKKFEKELKKLKKESQA.

2 residues coordinate Fe cation: Cys104 and His146. Glu147 is a catalytic residue. His150 contributes to the Fe cation binding site.

Belongs to the polypeptide deformylase family. Fe(2+) is required as a cofactor.

It carries out the reaction N-terminal N-formyl-L-methionyl-[peptide] + H2O = N-terminal L-methionyl-[peptide] + formate. Removes the formyl group from the N-terminal Met of newly synthesized proteins. Requires at least a dipeptide for an efficient rate of reaction. N-terminal L-methionine is a prerequisite for activity but the enzyme has broad specificity at other positions. The protein is Peptide deformylase of Helicobacter hepaticus (strain ATCC 51449 / 3B1).